Reading from the N-terminus, the 268-residue chain is MFRMLSSSFEDDPFFSESILAHRENMRQMMRSFTEPFGRDLLSISDGRGRVHNRRGHNDGEDSLTHTDVSSLQTVDQMVSNMRNYMQKLERNFGQLSVDPNGHSFCSSSVMTYSKIGDEPPKVFQASTQTRRAPGGIKETRKAMRDSDSGLEKMAIGHHIHDRAHVIKKSKNKKTGDEEVNQEFINMNESDAHAFDEEWQSEVLKYKPGRHNLENTRMRSVGHENPGSRELKRREKPQQSPAIEHGRRSDVLGDKLHIKGSSVKSNKK.

Phosphoserine occurs at positions 6, 8, and 32. The interval 50–125 is interaction with COPS3; it reads RVHNRRGHND…IGDEPPKVFQ (76 aa). The segment at 208-268 is disordered; it reads PGRHNLENTR…KGSSVKSNKK (61 aa). Composition is skewed to basic and acidic residues over residues 226–237 and 244–257; these read PGSRELKRREKP and EHGR…DKLH.

It belongs to the MLF family. Interacts with CENPU. Also interacts with NRBP1/MADM, YWHAZ/14-3-3-zeta and HNRPUL2/MANP. NRBP1 recruits a serine kinase which phosphorylates both itself and MLF1. Phosphorylated MLF1 then binds to YWHAZ and is retained in the cytoplasm. Retained in the nucleus by binding to HNRPUL2. Binds to COPS3/CSN3 which is required for suppression of COP1 and activation of p53. Post-translationally, phosphorylation is required for binding to YWHAZ.

The protein localises to the cytoplasm. It is found in the nucleus. The protein resides in the cell projection. Its subcellular location is the cilium. It localises to the cytoskeleton. The protein localises to the cilium basal body. In terms of biological role, involved in lineage commitment of primary hemopoietic progenitors by restricting erythroid formation and enhancing myeloid formation. Interferes with erythropoietin-induced erythroid terminal differentiation by preventing cells from exiting the cell cycle through suppression of CDKN1B/p27Kip1 levels. Suppresses COP1 activity via CSN3 which activates p53 and induces cell cycle arrest. Binds DNA and affects the expression of a number of genes so may function as a transcription factor in the nucleus. The chain is Myeloid leukemia factor 1 (MLF1) from Pongo abelii (Sumatran orangutan).